A 176-amino-acid chain; its full sequence is ATP-dependent protease subunit HslV (176 aa).

Thr2 is an active-site residue. The Na(+) site is built by Gly158, Cys161, and Thr164.

This sequence belongs to the peptidase T1B family. HslV subfamily. A double ring-shaped homohexamer of HslV is capped on each side by a ring-shaped HslU homohexamer. The assembly of the HslU/HslV complex is dependent on binding of ATP.

Its subcellular location is the cytoplasm. It carries out the reaction ATP-dependent cleavage of peptide bonds with broad specificity.. Allosterically activated by HslU binding. Protease subunit of a proteasome-like degradation complex believed to be a general protein degrading machinery. In Pasteurella multocida (strain Pm70), this protein is ATP-dependent protease subunit HslV.